We begin with the raw amino-acid sequence, 406 residues long: Terminal uridylyltransferase 7 (406 aa).

The N-terminal 15 residues, 1 to 15 (MNVAKREFIRGMMAH), are a transit peptide targeting the mitochondrion. UTP contacts are provided by residues Ser54 and 64–65 (SD). 2 residues coordinate Mg(2+): Asp65 and Asp67. Residues 138–142 (GVENS), Lys164, Lys168, and 181–183 (NSF) contribute to the UTP site.

Belongs to the DNA polymerase type-B-like family. Component of the mitochondrial RNA editing core complex-like (RECC-like), also known as the editosome-like complex; only a small proportion of MEAT1 associates with the complex. Interacts with RNA-editing ligase REL1. It depends on Mg(2+) as a cofactor.

The protein localises to the mitochondrion matrix. It carries out the reaction RNA(n) + UTP = RNA(n)-3'-uridine ribonucleotide + diphosphate. Terminal uridylyltransferase which, as part of the mitochondrial RNA editing core-like complex (RECC-like), is involved in the post-transcriptional editing of mitochondrial RNA, a process involving the addition and deletion of uridine (U) nucleotides in the pre-mRNA. Specifically, catalyzes the addition of U to single-stranded RNA with a preference for a 3'-terminal U and adds the number of Us specified by a guide RNA (gRNA) to precleaved double-stranded RNA editing substrates. Essential for insect and bloodstream developmental forms viability. This chain is Terminal uridylyltransferase 7, found in Trypanosoma brucei brucei.